The chain runs to 361 residues: Dihydroorotate dehydrogenase (quinone) (361 aa).

Residues 67 to 71 (AGLDK) and Thr91 each bind FMN. Lys71 lines the substrate pocket. 116–120 (NRMGF) lines the substrate pocket. FMN contacts are provided by Asn145 and Asn178. Asn178 serves as a coordination point for substrate. The Nucleophile role is filled by Ser181. Substrate is bound at residue Asn183. Positions 223 and 251 each coordinate FMN. 252–253 (NT) is a substrate binding site. FMN is bound by residues Gly273, Gly302, and 323–324 (YT).

Belongs to the dihydroorotate dehydrogenase family. Type 2 subfamily. As to quaternary structure, monomer. It depends on FMN as a cofactor.

The protein resides in the cell membrane. It carries out the reaction (S)-dihydroorotate + a quinone = orotate + a quinol. Its pathway is pyrimidine metabolism; UMP biosynthesis via de novo pathway; orotate from (S)-dihydroorotate (quinone route): step 1/1. In terms of biological role, catalyzes the conversion of dihydroorotate to orotate with quinone as electron acceptor. This Deinococcus geothermalis (strain DSM 11300 / CIP 105573 / AG-3a) protein is Dihydroorotate dehydrogenase (quinone).